Reading from the N-terminus, the 891-residue chain is 26S proteasome non-ATPase regulatory subunit 2 homolog B (891 aa).

Residues 1–43 form a disordered region; the sequence is MAPVPDPNSVGGGAKRDEATTKIPSKDSKKKDDKKEEDLSEED. A compositionally biased stretch (basic and acidic residues) spans 14–37; it reads AKRDEATTKIPSKDSKKKDDKKEE. PC repeat units follow at residues 414-447, 448-484, 485-519, 522-556, 565-594, 674-705, and 724-739; these read SAVA…PVVA, GALL…SVRI, GAIM…PLDV, FAAL…AELG, LGLG…KIRK, LALG…EVAM, and AGML…KDAS.

It belongs to the proteasome subunit S2 family. As to quaternary structure, component of the 19S regulatory particle (RP/PA700) base subcomplex of the 26S proteasome. The 26S proteasome is composed of a core protease (CP), known as the 20S proteasome, capped at one or both ends by the 19S regulatory particle (RP/PA700). The RP/PA700 complex is composed of at least 17 different subunits in two subcomplexes, the base and the lid, which form the portions proximal and distal to the 20S proteolytic core, respectively. Post-translationally, ubiquitinated. In terms of tissue distribution, expressed in stems, leaves, buds, flowers, siliques and developing seeds.

Functionally, acts as a regulatory subunit of the 26 proteasome which is involved in the ATP-dependent degradation of ubiquitinated proteins. This chain is 26S proteasome non-ATPase regulatory subunit 2 homolog B (RPN1B), found in Arabidopsis thaliana (Mouse-ear cress).